The primary structure comprises 739 residues: Poly(A) polymerase gamma (739 aa).

Residue Lys2 is modified to N6-acetyllysine. Ser23 carries the phosphoserine modification. Residues 99–101 (FGS), Thr108, 112–114 (DID), Asp166, Lys227, Tyr236, and 245–246 (GV) each bind ATP. 3 residues coordinate Mg(2+): Asp112, Asp114, and Asp166. A disordered region spans residues 506 to 566 (KSLSDVSRSS…PTGEIERSSA (61 aa)). Composition is skewed to polar residues over residues 509–531 (SDVS…TCLD) and 538–556 (SGTP…NPDS). Ser524 bears the Phosphoserine mark. 2 positions are modified to phosphoserine: Ser602 and Ser651. Thr657 carries the phosphothreonine modification. A compositionally biased stretch (basic and acidic residues) spans 677–688 (SRAAEDRKRKPM). The disordered stretch occupies residues 677–725 (SRAAEDRKRKPMDSIGGESMPIPTIDTARKKRLPSKELPDSSSPVPANN). Ser711 bears the Phosphoserine mark.

Belongs to the poly(A) polymerase family. It depends on Mg(2+) as a cofactor. Requires Mn(2+) as cofactor.

Its subcellular location is the nucleus. The enzyme catalyses RNA(n) + ATP = RNA(n)-3'-adenine ribonucleotide + diphosphate. Its function is as follows. Responsible for the post-transcriptional adenylation of the 3'-terminal of mRNA precursors and several small RNAs including signal recognition particle (SRP) RNA, nuclear 7SK RNA, U2 small nuclear RNA, and ribosomal 5S RNA. The polypeptide is Poly(A) polymerase gamma (Papolg) (Mus musculus (Mouse)).